Consider the following 1149-residue polypeptide: DNA polymerase (1149 aa).

A compositionally biased stretch (polar residues) spans M1–P28. Residues M1–P49 form a disordered region. Residues P31–P49 are compositionally biased toward low complexity.

It belongs to the DNA polymerase type-B family. In terms of assembly, heterodimer with the terminal protein; this heterodimer binds to bp 9 to 18 of the genome. Forms a complex with viral pTP, DBP and hosts NFIA and POU2F1/OCT1 for initiation of replication.

The protein resides in the host nucleus. It carries out the reaction DNA(n) + a 2'-deoxyribonucleoside 5'-triphosphate = DNA(n+1) + diphosphate. In terms of biological role, eukaryotic-type DNA polymerase involved in viral genomic replication. DNA synthesis is protein primed, and acts in a strand displacement replication. Assembles in complex with viral pTP, DBP, host NFIA and host POU2F1/OCT1 on viral origin of replication. The polymerase covalently transfers dCMP onto pTP, thereby initiating complementary strand synthesis. This is DNA polymerase from Canine adenovirus serotype 1 (strain CLL) (CAdV-1).